The primary structure comprises 173 residues: Protein Rv3753c (173 aa).

The chain is Protein Rv3753c from Mycobacterium tuberculosis (strain ATCC 25618 / H37Rv).